Here is a 321-residue protein sequence, read N- to C-terminus: Probable 3-hydroxyisobutyrate dehydrogenase, mitochondrial (321 aa).

NAD(+) contacts are provided by residues 23–52, 86–87, and Thr117; these read KTVG…IVFD and LP. Lys192 is an active-site residue. Residue Lys267 coordinates NAD(+).

This sequence belongs to the HIBADH-related family. 3-hydroxyisobutyrate dehydrogenase subfamily.

Its subcellular location is the mitochondrion. It carries out the reaction 3-hydroxy-2-methylpropanoate + NAD(+) = 2-methyl-3-oxopropanoate + NADH + H(+). Its pathway is amino-acid degradation; L-valine degradation. This chain is Probable 3-hydroxyisobutyrate dehydrogenase, mitochondrial (hibA), found in Dictyostelium discoideum (Social amoeba).